Consider the following 453-residue polypeptide: Tubulin beta-2 chain (453 aa).

8 residues coordinate GTP: Gln11, Glu71, Ser140, Gly144, Thr145, Gly146, Asn206, and Asn228. Residue Glu71 participates in Mg(2+) binding.

Belongs to the tubulin family. In terms of assembly, dimer of alpha and beta chains. A typical microtubule is a hollow water-filled tube with an outer diameter of 25 nm and an inner diameter of 15 nM. Alpha-beta heterodimers associate head-to-tail to form protofilaments running lengthwise along the microtubule wall with the beta-tubulin subunit facing the microtubule plus end conferring a structural polarity. Microtubules usually have 13 protofilaments but different protofilament numbers can be found in some organisms and specialized cells. Mg(2+) serves as cofactor.

It is found in the cytoplasm. Its subcellular location is the cytoskeleton. Its function is as follows. Tubulin is the major constituent of microtubules, a cylinder consisting of laterally associated linear protofilaments composed of alpha- and beta-tubulin heterodimers. Microtubules grow by the addition of GTP-tubulin dimers to the microtubule end, where a stabilizing cap forms. Below the cap, tubulin dimers are in GDP-bound state, owing to GTPase activity of alpha-tubulin. The protein is Tubulin beta-2 chain of Geotrichum candidum (Oospora lactis).